Reading from the N-terminus, the 66-residue chain is Delta-buthitoxin-Hj1a (66 aa).

The LCN-type CS-alpha/beta domain maps to 4–66; the sequence is RDAYIAQPHN…EPIKVPGKCH (63 aa). Cystine bridges form between cysteine 14–cysteine 65, cysteine 18–cysteine 38, cysteine 24–cysteine 48, and cysteine 28–cysteine 50.

The protein belongs to the long (4 C-C) scorpion toxin superfamily. Sodium channel inhibitor family. Alpha subfamily. In terms of tissue distribution, expressed by the venom gland.

Its subcellular location is the secreted. This recombinant toxin slows fast inactivation on Nav1.1/SCN1A (EC(50)=17 nM), Nav1.4/SN4A (EC(50)=7.5 nM), Nav1.5/SCN5A (EC(50)=9.2 nM) and Nav1.6/SCN8A (EC(50)=37.3 nM) voltage-gated sodium channels. On Nav1.1/SCN1A channel, it acts as an agonist by inducing a shift in both the voltage dependence of channel inactivation (alpha-toxin activity) and activation (beta-toxin activity). In vivo, shows moderate insecticidal activities. It induces irreversible paralysis in blowflies and lethal effects in D.melanogaster. This is Delta-buthitoxin-Hj1a from Hottentotta judaicus (Black scorpion).